Reading from the N-terminus, the 542-residue chain is Probable quinate permease (542 aa).

The Cytoplasmic segment spans residues 1-22 (MSILALVEDRPTPKEVYNWKIY). The chain crosses the membrane as a helical span at residues 23-43 (LLAAVASFTSCMIGYDSAFIG). Residues 44-74 (TTLALSSFREEFGFSTMSKTAVNLVSANIVS) are Extracellular-facing. A helical membrane pass occupies residues 75–95 (CYQAGAFFGAFFAYPIGHFWG). Over 96–97 (RK) the chain is Cytoplasmic. A helical transmembrane segment spans residues 98-118 (WGLLFAGTIFTLGAGLMLGAN). The Extracellular portion of the chain corresponds to 119-130 (GDRGLGLLYGGR). Residues 131 to 151 (VLAGLGVGAGSNITPIYISEM) traverse the membrane as a helical segment. Residues 152–159 (APPSIRGR) are Cytoplasmic-facing. Residues 160-180 (LVGVYELGWQIGGLVGFWINY) traverse the membrane as a helical segment. At 181–193 (GVSETLAPSHKQW) the chain is on the extracellular side. Residues 194-214 (IIPFAVQLIPSGLLLIGAVFL) traverse the membrane as a helical segment. At 215 to 285 (KESPRWLFSR…AGTNKKVMYR (71 aa)) the chain is on the cytoplasmic side. Residues 286-306 (LFLGSMLFFWQNGSGINAINY) form a helical membrane-spanning segment. Residues 307–325 (YSPTVFKSIGLHGANTSMF) are Extracellular-facing. Residues 326 to 346 (STGIFGVVKTVVTFVWLLYLI) traverse the membrane as a helical segment. Residues 347–352 (DRVGRR) are Cytoplasmic-facing. Residues 353 to 373 (LLLLIGAAGAAVCLLIVGAYI) traverse the membrane as a helical segment. Over 374–387 (KIADPASNPTQEMT) the chain is Extracellular. The helical transmembrane segment at 388 to 408 (GGGIAAMFFFYLYTVFYTPSW) threads the bilayer. Over 409–456 (NGTPWVMNSEMFEPNMRSLAQACAAASNWLWNFLISRFTPQMFAKMEY) the chain is Cytoplasmic. A helical membrane pass occupies residues 457–477 (GVWFFFASLMLLSIVFVFFLV). At 478–542 (PETKGIPLES…EHVSEDLPKV (65 aa)) the chain is on the extracellular side. The segment at 523–542 (GYSKTGEQQVEHVSEDLPKV) is disordered. Residues 531–542 (QVEHVSEDLPKV) show a composition bias toward basic and acidic residues.

Belongs to the major facilitator superfamily. Sugar transporter (TC 2.A.1.1) family. In terms of assembly, interacts with creB. Post-translationally, ubiquitinated. Deubiquitinated by creB, probably to control its activity or amount.

Its subcellular location is the cell membrane. Functionally, integral membrane transporter that imports quinic acid to be catabolized as a carbon source. This is Probable quinate permease (qutD) from Aspergillus fumigatus (strain ATCC MYA-4609 / CBS 101355 / FGSC A1100 / Af293) (Neosartorya fumigata).